Here is a 109-residue protein sequence, read N- to C-terminus: uncharacterized protein (109 aa).

2 helical membrane-spanning segments follow: residues 24-44 (SLGI…SAFV) and 68-88 (VIVL…SIFI).

The protein localises to the membrane. This is an uncharacterized protein from Saccharomyces cerevisiae (strain ATCC 204508 / S288c) (Baker's yeast).